Reading from the N-terminus, the 805-residue chain is Arginine/serine-rich protein PNISR (805 aa).

The segment covering 74–88 (PNNHGNFQGDSNFNR) has biased composition (polar residues). Disordered regions lie at residues 74 to 331 (PNNH…EEKE) and 382 to 805 (LTGL…SRSR). Pro residues-rich tracts occupy residues 100–115 (PPHPPPDQPWMPPTPG) and 183–195 (YWQPGPPGPPAPP). Residues 197–210 (NRRERPSSFRDRQR) are compositionally biased toward basic and acidic residues. Residues serine 204 and serine 211 each carry the phosphoserine modification. Lysine 218 participates in a covalent cross-link: Glycyl lysine isopeptide (Lys-Gly) (interchain with G-Cter in SUMO2). Positions 237–276 (REGLEKMEREKQKKLEKERMEQQRSQLSKKEKKATEDAEG) form a coiled coil. Over residues 238–258 (EGLEKMEREKQKKLEKERMEQ) the composition is skewed to basic and acidic residues. Phosphoserine occurs at positions 290, 304, 313, and 321. The segment covering 290-299 (SDEEEEDTEN) has biased composition (acidic residues). Positions 384 to 393 (GLGGLGGYGS) are enriched in gly residues. A compositionally biased stretch (basic and acidic residues) spans 421–463 (QKQEAFWRKEKEQQLLHDKQMEEEKQQTERVTKEMNEFIHKEQ). Residues 429-461 (KEKEQQLLHDKQMEEEKQQTERVTKEMNEFIHK) adopt a coiled-coil conformation. Phosphoserine is present on residues serine 465 and serine 467. Composition is skewed to basic and acidic residues over residues 470–486 (EAREADGDVVNEKKRTP) and 494–506 (EPKKEHKEKEKQG). The residue at position 485 (threonine 485) is a Phosphothreonine. A Glycyl lysine isopeptide (Lys-Gly) (interchain with G-Cter in SUMO2) cross-link involves residue lysine 496. Low complexity predominate over residues 508-550 (SRSGSSSSGSSSSNSRTSSTSSTVSSSSYSSSSGSSRTSSRSS). Basic residues-rich tracts occupy residues 551–579 (SPKRKKRHSRSRSPTIKARRSRSRSYSRR), 587–598 (ARVKIRDRRRSN), and 607–639 (RRNRSPSRERRRSRSRSRDRRTNRASRSRSRDR). The segment covering 659 to 721 (EAKEQERKKE…KRKRESERTF (63 aa)) has biased composition (basic and acidic residues). Positions 673–703 (IDKDRKKKDKEREREQDKRKEKQKREEKDFK) form a coiled coil. A Glycyl lysine isopeptide (Lys-Gly) (interchain with G-Cter in SUMO2) cross-link involves residue lysine 703. Serine 726 bears the Phosphoserine mark. Residues 732–753 (IRHDSRQDSKKSTTKDSKKHSG) show a composition bias toward basic and acidic residues. Residues 754–767 (SDSSGRSSSESPGS) are compositionally biased toward low complexity. Composition is skewed to basic residues over residues 771-781 (KKAKKPKHSRS) and 789-805 (RSGKKASRKHKSKSRSR).

It belongs to the splicing factor SR family. Interacts with PNN. As to expression, expressed in heart, skeletal muscle, thymus, spleen, kidney, liver, placenta and leukocytes.

The protein resides in the nucleus speckle. The sequence is that of Arginine/serine-rich protein PNISR (PNISR) from Homo sapiens (Human).